The following is a 151-amino-acid chain: UPF0178 protein Suden_0449 (151 aa).

It belongs to the UPF0178 family.

This Sulfurimonas denitrificans (strain ATCC 33889 / DSM 1251) (Thiomicrospira denitrificans (strain ATCC 33889 / DSM 1251)) protein is UPF0178 protein Suden_0449.